A 428-amino-acid chain; its full sequence is Serine--tRNA ligase (428 aa).

An L-serine-binding site is contributed by 231-233 (TAE). 262–264 (RSE) serves as a coordination point for ATP. Glutamate 285 provides a ligand contact to L-serine. 349-352 (EISS) is a binding site for ATP. Serine 385 serves as a coordination point for L-serine.

Belongs to the class-II aminoacyl-tRNA synthetase family. Type-1 seryl-tRNA synthetase subfamily. As to quaternary structure, homodimer. The tRNA molecule binds across the dimer.

The protein localises to the cytoplasm. The catalysed reaction is tRNA(Ser) + L-serine + ATP = L-seryl-tRNA(Ser) + AMP + diphosphate + H(+). It carries out the reaction tRNA(Sec) + L-serine + ATP = L-seryl-tRNA(Sec) + AMP + diphosphate + H(+). Its pathway is aminoacyl-tRNA biosynthesis; selenocysteinyl-tRNA(Sec) biosynthesis; L-seryl-tRNA(Sec) from L-serine and tRNA(Sec): step 1/1. Functionally, catalyzes the attachment of serine to tRNA(Ser). Is also able to aminoacylate tRNA(Sec) with serine, to form the misacylated tRNA L-seryl-tRNA(Sec), which will be further converted into selenocysteinyl-tRNA(Sec). The chain is Serine--tRNA ligase from Staphylococcus epidermidis (strain ATCC 35984 / DSM 28319 / BCRC 17069 / CCUG 31568 / BM 3577 / RP62A).